The chain runs to 217 residues: Large ribosomal subunit protein uL4 (217 aa).

The interval K46–R102 is disordered.

This sequence belongs to the universal ribosomal protein uL4 family. In terms of assembly, part of the 50S ribosomal subunit.

One of the primary rRNA binding proteins, this protein initially binds near the 5'-end of the 23S rRNA. It is important during the early stages of 50S assembly. It makes multiple contacts with different domains of the 23S rRNA in the assembled 50S subunit and ribosome. In terms of biological role, forms part of the polypeptide exit tunnel. The protein is Large ribosomal subunit protein uL4 of Corynebacterium diphtheriae (strain ATCC 700971 / NCTC 13129 / Biotype gravis).